The sequence spans 192 residues: Probable nicotinate-nucleotide adenylyltransferase (192 aa).

Belongs to the NadD family.

The enzyme catalyses nicotinate beta-D-ribonucleotide + ATP + H(+) = deamido-NAD(+) + diphosphate. Its pathway is cofactor biosynthesis; NAD(+) biosynthesis; deamido-NAD(+) from nicotinate D-ribonucleotide: step 1/1. Functionally, catalyzes the reversible adenylation of nicotinate mononucleotide (NaMN) to nicotinic acid adenine dinucleotide (NaAD). The protein is Probable nicotinate-nucleotide adenylyltransferase of Rhizobium etli (strain ATCC 51251 / DSM 11541 / JCM 21823 / NBRC 15573 / CFN 42).